Here is a 158-residue protein sequence, read N- to C-terminus: C-type lectin mannose-binding isoform (158 aa).

A signal peptide spans 1-20 (MGRFLLVTLSMLVVTFSLNE). 3 cysteine pairs are disulfide-bonded: cysteine 26–cysteine 37, cysteine 54–cysteine 154, and cysteine 129–cysteine 146. Positions 33–155 (KNGFCYKVFN…CEALYHFICQ (123 aa)) constitute a C-type lectin domain. The Mannose-binding motif lies at 119–121 (EPN). The N-linked (GlcNAc...) asparagine glycan is linked to asparagine 121. Glutamate 127, asparagine 142, and aspartate 143 together coordinate Ca(2+).

The protein belongs to the true venom lectin family. In terms of assembly, homodimer; disulfide-linked. In terms of tissue distribution, expressed by the venom gland.

It is found in the secreted. Functionally, mannose-binding lectin that binds to and agglutinates erythrocytes in a calcium-dependent manner. The polypeptide is C-type lectin mannose-binding isoform (Notechis scutatus scutatus (Mainland tiger snake)).